The chain runs to 345 residues: Heat-inducible transcription repressor HrcA (345 aa).

The protein belongs to the HrcA family.

Its function is as follows. Negative regulator of class I heat shock genes (grpE-dnaK-dnaJ and groELS operons). Prevents heat-shock induction of these operons. The sequence is that of Heat-inducible transcription repressor HrcA from Lachnoclostridium phytofermentans (strain ATCC 700394 / DSM 18823 / ISDg) (Clostridium phytofermentans).